The chain runs to 379 residues: Probable pectin lyase A (379 aa).

Residues 1 to 20 (MKYSTIFSAAAAVFAGSAAA) form the signal peptide. 2 cysteine pairs are disulfide-bonded: cysteine 83–cysteine 102 and cysteine 92–cysteine 226. The N-linked (GlcNAc...) asparagine glycan is linked to asparagine 129. Residue arginine 256 is part of the active site. The cysteines at positions 322 and 330 are disulfide-linked.

This sequence belongs to the polysaccharide lyase 1 family.

The protein resides in the secreted. It carries out the reaction Eliminative cleavage of (1-&gt;4)-alpha-D-galacturonan methyl ester to give oligosaccharides with 4-deoxy-6-O-methyl-alpha-D-galact-4-enuronosyl groups at their non-reducing ends.. Functionally, pectinolytic enzymes consist of four classes of enzymes: pectin lyase, polygalacturonase, pectin methylesterase and rhamnogalacturonase. Among pectinolytic enzymes, pectin lyase is the most important in depolymerization of pectin, since it cleaves internal glycosidic bonds of highly methylated pectins. This Aspergillus niger (strain ATCC MYA-4892 / CBS 513.88 / FGSC A1513) protein is Probable pectin lyase A (pelA).